The following is an 825-amino-acid chain: Quinic acid utilization activator (825 aa).

Over residues 1-12 (MSSDTRQTSGGN) the composition is skewed to polar residues. Residues 1–45 (MSSDTRQTSGGNARSKRRLTDAVDEDGRPTATAEDPTSNPKRQRV) are disordered. Over residues 18–28 (RLTDAVDEDGR) the composition is skewed to basic and acidic residues. A DNA-binding region (zn(2)-C6 fungal-type) is located at residues 49–76 (CDSCRSKKDKCDGAQPICSTCASLSRPC). 3 disordered regions span residues 160 to 186 (EQPE…SSVL), 204 to 224 (QSPL…TTRL), and 658 to 683 (GSQR…SLPG). Over residues 165–174 (DQERSARGEI) the composition is skewed to basic and acidic residues. Over residues 658 to 672 (GSQRRPRHATQQGTH) the composition is skewed to polar residues.

It is found in the nucleus. Functionally, transcription activation of genes for enzymes and proteins of quinate metabolism by binding to a 16 base-pair sequence (consensus 5'-GGATAANNNNTTATCC-3') in front of each qut gene. In Emericella nidulans (strain FGSC A4 / ATCC 38163 / CBS 112.46 / NRRL 194 / M139) (Aspergillus nidulans), this protein is Quinic acid utilization activator (qutA).